The chain runs to 453 residues: Phosphoglucosamine mutase (453 aa).

S109 acts as the Phosphoserine intermediate in catalysis. The Mg(2+) site is built by S109, D246, D248, and D250. S109 carries the post-translational modification Phosphoserine.

It belongs to the phosphohexose mutase family. Requires Mg(2+) as cofactor. Activated by phosphorylation.

The catalysed reaction is alpha-D-glucosamine 1-phosphate = D-glucosamine 6-phosphate. Catalyzes the conversion of glucosamine-6-phosphate to glucosamine-1-phosphate. The polypeptide is Phosphoglucosamine mutase (Leifsonia xyli subsp. xyli (strain CTCB07)).